The sequence spans 142 residues: Large ribosomal subunit protein uL13 (142 aa).

The protein belongs to the universal ribosomal protein uL13 family. As to quaternary structure, part of the 50S ribosomal subunit.

In terms of biological role, this protein is one of the early assembly proteins of the 50S ribosomal subunit, although it is not seen to bind rRNA by itself. It is important during the early stages of 50S assembly. The sequence is that of Large ribosomal subunit protein uL13 from Aeromonas hydrophila subsp. hydrophila (strain ATCC 7966 / DSM 30187 / BCRC 13018 / CCUG 14551 / JCM 1027 / KCTC 2358 / NCIMB 9240 / NCTC 8049).